Consider the following 341-residue polypeptide: Paired box protein Pax-9 (341 aa).

Positions 4 to 130 (AFGEVNQLGG…SSISRILRNK (127 aa)) form a DNA-binding region, paired. Residues 7-63 (EVNQLGGVFVNGRPLPNAIRLRIVELAQLGIRPCDISRQLRVSHGCVSKILARYNET) form a PAI subdomain region. Residues 82–130 (TVVKHIRTYKQRDPGIFAWEIRDRLLADGVCDKYNVPSVSSISRILRNK) are RED subdomain. The interval 168–189 (AAAAKVPTPPGVPAIPGSVAMP) is interaction with KDM5B.

In terms of assembly, interacts with KDM5B.

It is found in the nucleus. Its function is as follows. Transcription factor required for normal development of thymus, parathyroid glands, ultimobranchial bodies, teeth, skeletal elements of skull and larynx as well as distal limbs. This Daubentonia madagascariensis (Aye-aye) protein is Paired box protein Pax-9 (PAX9).